The sequence spans 457 residues: Cysteine--tRNA ligase (457 aa).

Cysteine 28 contributes to the Zn(2+) binding site. The short motif at 30–40 is the 'HIGH' region element; it reads PTVYDTAHIGN. 3 residues coordinate Zn(2+): cysteine 212, histidine 237, and glutamate 241. Positions 270–274 match the 'KMSKS' region motif; it reads KMSKS. Position 273 (lysine 273) interacts with ATP.

It belongs to the class-I aminoacyl-tRNA synthetase family. As to quaternary structure, monomer. Zn(2+) serves as cofactor.

The protein localises to the cytoplasm. It carries out the reaction tRNA(Cys) + L-cysteine + ATP = L-cysteinyl-tRNA(Cys) + AMP + diphosphate. The polypeptide is Cysteine--tRNA ligase (Wolbachia sp. subsp. Drosophila simulans (strain wRi)).